Reading from the N-terminus, the 517-residue chain is tRNA-2-methylthio-N(6)-dimethylallyladenosine synthase (517 aa).

Positions 29–146 constitute an MTTase N-terminal domain; that stretch reads RTYQVRTYGC…LPTLLERARH (118 aa). [4Fe-4S] cluster is bound by residues cysteine 38, cysteine 75, cysteine 109, cysteine 183, cysteine 187, and cysteine 190. In terms of domain architecture, Radical SAM core spans 169–405; it reads RESAYAAWVS…VELQESISLQ (237 aa). The 68-residue stretch at 408 to 475 folds into the TRAM domain; that stretch reads QALVGQTVEL…PHHLIADAGV (68 aa).

It belongs to the methylthiotransferase family. MiaB subfamily. As to quaternary structure, monomer. The cofactor is [4Fe-4S] cluster.

The protein resides in the cytoplasm. The catalysed reaction is N(6)-dimethylallyladenosine(37) in tRNA + (sulfur carrier)-SH + AH2 + 2 S-adenosyl-L-methionine = 2-methylsulfanyl-N(6)-dimethylallyladenosine(37) in tRNA + (sulfur carrier)-H + 5'-deoxyadenosine + L-methionine + A + S-adenosyl-L-homocysteine + 2 H(+). Its function is as follows. Catalyzes the methylthiolation of N6-(dimethylallyl)adenosine (i(6)A), leading to the formation of 2-methylthio-N6-(dimethylallyl)adenosine (ms(2)i(6)A) at position 37 in tRNAs that read codons beginning with uridine. In Mycolicibacterium paratuberculosis (strain ATCC BAA-968 / K-10) (Mycobacterium paratuberculosis), this protein is tRNA-2-methylthio-N(6)-dimethylallyladenosine synthase.